The primary structure comprises 148 residues: Large ribosomal subunit protein bL19 (148 aa).

This sequence belongs to the bacterial ribosomal protein bL19 family.

This protein is located at the 30S-50S ribosomal subunit interface and may play a role in the structure and function of the aminoacyl-tRNA binding site. The chain is Large ribosomal subunit protein bL19 from Beijerinckia indica subsp. indica (strain ATCC 9039 / DSM 1715 / NCIMB 8712).